The chain runs to 364 residues: Aminomethyltransferase (364 aa).

The protein belongs to the GcvT family. In terms of assembly, the glycine cleavage system is composed of four proteins: P, T, L and H.

It carries out the reaction N(6)-[(R)-S(8)-aminomethyldihydrolipoyl]-L-lysyl-[protein] + (6S)-5,6,7,8-tetrahydrofolate = N(6)-[(R)-dihydrolipoyl]-L-lysyl-[protein] + (6R)-5,10-methylene-5,6,7,8-tetrahydrofolate + NH4(+). Its function is as follows. The glycine cleavage system catalyzes the degradation of glycine. This Shewanella loihica (strain ATCC BAA-1088 / PV-4) protein is Aminomethyltransferase.